Here is a 140-residue protein sequence, read N- to C-terminus: Large ribosomal subunit protein uL16 (140 aa).

This sequence belongs to the universal ribosomal protein uL16 family. In terms of assembly, part of the 50S ribosomal subunit.

Functionally, binds 23S rRNA and is also seen to make contacts with the A and possibly P site tRNAs. The sequence is that of Large ribosomal subunit protein uL16 from Malacoplasma penetrans (strain HF-2) (Mycoplasma penetrans).